A 634-amino-acid polypeptide reads, in one-letter code: Growth hormone receptor (634 aa).

An N-terminal signal peptide occupies residues 1–18 (MDLWQLLLTLAVAGSSDA). Residues 19–260 (FSGSEATPAF…NPSACEEDFQ (242 aa)) lie on the Extracellular side of the membrane. N-linked (GlcNAc...) asparagine glycosylation is present at N46. C56 and C66 are joined by a disulfide. Residue N73 is glycosylated (N-linked (GlcNAc...) asparagine). An intrachain disulfide couples C97 to C108. A glycan (N-linked (GlcNAc...) asparagine) is linked at N111. A disulfide bond links C122 and C136. In terms of domain architecture, Fibronectin type-III spans 147–250 (PPVGLNWTLL…EVLLITFPQM (104 aa)). N152, N157, and N196 each carry an N-linked (GlcNAc...) asparagine glycan. The WSXWS motif motif lies at 236–240 (YGKFS). Residues 261–284 (FPWFLIIIFGILGLTVTLFLLIFS) traverse the membrane as a helical segment. Residues 285–634 (KQQRIKMLIL…STDQLNKIMP (350 aa)) are Cytoplasmic-facing. A required for JAK2 binding region spans residues 290-375 (KMLILPPVPV…HEKSLSIFGA (86 aa)). The Box 1 motif motif lies at 293–301 (ILPPVPVPK). The UbE motif motif lies at 336-345 (DSWVEFIELD). S337 carries the post-translational modification Phosphoserine. Residues 451-471 (KPRPLPIGGTESTHQAVHTQL) form a disordered region. Residues 460–471 (TESTHQAVHTQL) are compositionally biased toward polar residues. Phosphotyrosine occurs at positions 483 and 591.

It belongs to the type I cytokine receptor family. Type 1 subfamily. As to quaternary structure, on growth hormone (GH) binding, forms homodimers and binds JAK2 via a box 1-containing domain. In terms of processing, the soluble form (GHBP) is produced by phorbol ester-promoted proteolytic cleavage at the cell surface (shedding) by ADAM17/TACE. Shedding is inhibited by growth hormone (GH) binding to the receptor probably due to a conformational change in GHR rendering the receptor inaccessible to ADAM17. On GH binding, phosphorylated on tyrosine residues in the cytoplasmic domain by JAK2. Post-translationally, ubiquitinated by the ECS(SOCS2) complex following ligand-binding and phosphorylation by JAK2, leading to its degradation by the proteasome. Regulation by the ECS(SOCS2) complex acts as a negative feedback loop of growth hormone receptor signaling. Ubiquitination is not sufficient for GHR internalization.

The protein localises to the cell membrane. It localises to the secreted. In terms of biological role, receptor for pituitary gland growth hormone (GH1) involved in regulating postnatal body growth. On ligand binding, couples to the JAK2/STAT5 pathway. The soluble form (GHBP) acts as a reservoir of growth hormone in plasma and may be a modulator/inhibitor of GH signaling. This is Growth hormone receptor (GHR) from Ovis aries (Sheep).